Consider the following 366-residue polypeptide: Phenylalanine--tRNA ligase alpha subunit (366 aa).

Glu259 contacts Mg(2+).

This sequence belongs to the class-II aminoacyl-tRNA synthetase family. Phe-tRNA synthetase alpha subunit type 1 subfamily. As to quaternary structure, tetramer of two alpha and two beta subunits. It depends on Mg(2+) as a cofactor.

The protein resides in the cytoplasm. It carries out the reaction tRNA(Phe) + L-phenylalanine + ATP = L-phenylalanyl-tRNA(Phe) + AMP + diphosphate + H(+). This chain is Phenylalanine--tRNA ligase alpha subunit, found in Novosphingobium aromaticivorans (strain ATCC 700278 / DSM 12444 / CCUG 56034 / CIP 105152 / NBRC 16084 / F199).